A 412-amino-acid chain; its full sequence is DnaJ homolog subfamily A member 2 (412 aa).

The region spanning 8 to 70 (KLYDILGVPP…EKRELYDRYG (63 aa)) is the J domain. An N6-acetyllysine modification is found at Lys39. Residues Ser78 and Ser123 each carry the phosphoserine modification. A CR-type zinc finger spans residues 130-214 (GKTTKLQLSK…CEGKKVIKEV (85 aa)). Lys134 participates in a covalent cross-link: Glycyl lysine isopeptide (Lys-Gly) (interchain with G-Cter in SUMO2). Zn(2+) contacts are provided by Cys143 and Cys146. One copy of the CXXCXGXG motif repeat lies at 143-150 (CSACSGQG). N6-acetyllysine is present on Lys152. Positions 159, 162, 186, 189, 202, and 205 each coordinate Zn(2+). CXXCXGXG motif repeat units follow at residues 159-166 (CSACRGRG), 186-193 (CSDCNGEG), and 202-209 (CKKCEGKK). Positions 365–412 (IGETEEVELQEFDSTRGSGGGQRREAYNDSSDEESSSHHGPGVQCAHQ) are disordered. Tyr391 carries the phosphotyrosine modification. 2 positions are modified to phosphoserine: Ser394 and Ser395. Cys409 is subject to Cysteine methyl ester. The S-farnesyl cysteine moiety is linked to residue Cys409. The propeptide at 410–412 (AHQ) is removed in mature form.

It is found in the membrane. In terms of biological role, co-chaperone of Hsc70. Stimulates ATP hydrolysis and the folding of unfolded proteins mediated by HSPA1A/B (in vitro). This Rattus norvegicus (Rat) protein is DnaJ homolog subfamily A member 2 (Dnaja2).